Here is a 254-residue protein sequence, read N- to C-terminus: Distal membrane-arm assembly complex protein 2 (254 aa).

Serine 250 carries the phosphoserine modification.

The protein belongs to the ATP synthase subunit s family. Interacts with incompletely assembled mitochondrial NADH:ubiquinone oxidoreductase complex (complex I).

The protein resides in the mitochondrion. In terms of biological role, required for the assembly of the mitochondrial NADH:ubiquinone oxidoreductase complex (complex I). Involved in the assembly of the distal region of complex I. The chain is Distal membrane-arm assembly complex protein 2 from Rattus norvegicus (Rat).